Reading from the N-terminus, the 287-residue chain is Probable glucose uptake protein GlcU (287 aa).

The next 9 helical transmembrane spans lie at 7-29, 34-56, 58-75, 114-136, 156-178, 183-202, 209-228, 233-255, and 267-286; these read LIAL…VGGG, IRGT…FAKF, NPTV…WAFG, WSSM…GVAL, MGIL…IFGV, ALFF…SMNH, TALN…FMFY, VGVA…GGIF, and TGIW…LGNL.

This sequence belongs to the GRP transporter (TC 2.A.7.5) family.

It localises to the cell membrane. Involved in the uptake of glucose. The polypeptide is Probable glucose uptake protein GlcU (glcU) (Staphylococcus aureus (strain COL)).